Consider the following 310-residue polypeptide: Ribosomal RNA small subunit methyltransferase H (310 aa).

Residues 35 to 37, Asp52, Phe79, Asp100, and Gln107 contribute to the S-adenosyl-L-methionine site; that span reads GGH.

This sequence belongs to the methyltransferase superfamily. RsmH family.

It is found in the cytoplasm. The catalysed reaction is cytidine(1402) in 16S rRNA + S-adenosyl-L-methionine = N(4)-methylcytidine(1402) in 16S rRNA + S-adenosyl-L-homocysteine + H(+). In terms of biological role, specifically methylates the N4 position of cytidine in position 1402 (C1402) of 16S rRNA. This Anaeromyxobacter dehalogenans (strain 2CP-1 / ATCC BAA-258) protein is Ribosomal RNA small subunit methyltransferase H.